The chain runs to 417 residues: MSLAHTTVLLWAWGSLQAFEIVEKESVFQRTPCPAFLVFDNAAYLADMSFELPCHCKPEDVSAVVWYYQKHLGSKRTTVLTDFDGRLLTEAAHVRVGSSMLVRFSIRMFSLLVFRAQPEDTGLYFCGTREGDYFYAYDVDIQSNKEIVASFKDMAQEPLPDEYYGALHVFTTFWEWTPCDRCGVRGEQWRFGLCYLQYPDLSPRYIKTRSAVVSCGSGAVPWKLHLQTKYHTPELQFQSCLVSCQKRNKTRKGVLAIYSYVSKLGSRPWVPQVPIQFHQQRLGHGLIISCPGARPEHAVAWDKDNQPLYRAQYLKGVNRSMRVFIDHGNHLHIRFTQLSDRGIYYCWLQGLKIAGFRLGVITRGRYPASLSDPETRTAIELTLMGYLLITIFFITIHLCRCCCQSRCCPNFSAQTLL.

An N-terminal signal peptide occupies residues 1–18; sequence MSLAHTTVLLWAWGSLQA. Residues 19–377 are Extracellular-facing; it reads FEIVEKESVF…ASLSDPETRT (359 aa). N-linked (GlcNAc...) asparagine glycosylation is found at asparagine 248 and asparagine 318. An Ig-like V-type domain is found at 268–362; sequence PWVPQVPIQF…IAGFRLGVIT (95 aa). The cysteines at positions 290 and 346 are disulfide-linked. A helical membrane pass occupies residues 378-398; the sequence is AIELTLMGYLLITIFFITIHL. The Cytoplasmic segment spans residues 399–417; it reads CRCCCQSRCCPNFSAQTLL.

The protein belongs to the FAM187 family.

Its subcellular location is the membrane. The sequence is that of Ig-like V-type domain-containing protein FAM187A (Fam187a) from Mus musculus (Mouse).